A 94-amino-acid polypeptide reads, in one-letter code: Small ribosomal subunit protein eS24 (94 aa).

Belongs to the eukaryotic ribosomal protein eS24 family.

In Nanoarchaeum equitans (strain Kin4-M), this protein is Small ribosomal subunit protein eS24.